Reading from the N-terminus, the 441-residue chain is C4-dicarboxylate transport protein (441 aa).

Helical transmembrane passes span 9-29 (SLYF…HFMP), 45-65 (LVKM…IAGM), 79-99 (LLYF…VVNV), 145-165 (AFAE…GFAL), 187-207 (FAAI…AMAF), 220-240 (LAAL…LVLG), 308-328 (IYLT…LTLT), and 356-376 (AATL…ILGI).

Belongs to the dicarboxylate/amino acid:cation symporter (DAACS) (TC 2.A.23) family.

The protein localises to the cell inner membrane. Responsible for the transport of dicarboxylates such as succinate, fumarate, and malate from the periplasm across the membrane. This chain is C4-dicarboxylate transport protein, found in Laribacter hongkongensis (strain HLHK9).